The chain runs to 994 residues: Probable beta-galactosidase C (994 aa).

The signal sequence occupies residues 1–19 (MKLQSILSCWAILVAQIWA). Y78 lines the substrate pocket. Residue N88 is glycosylated (N-linked (GlcNAc...) asparagine). Positions 123, 124, 125, and 183 each coordinate substrate. The Proton donor role is filled by E184. A substrate-binding site is contributed by Y247. C253 and C301 form a disulfide bridge. N272 carries an N-linked (GlcNAc...) asparagine glycan. E283 functions as the Nucleophile in the catalytic mechanism. A substrate-binding site is contributed by Y350. N-linked (GlcNAc...) asparagine glycans are attached at residues N388, N407, N433, N500, N514, N521, N584, N600, N674, N712, N717, N757, N861, and N969.

It belongs to the glycosyl hydrolase 35 family.

Its subcellular location is the secreted. The catalysed reaction is Hydrolysis of terminal non-reducing beta-D-galactose residues in beta-D-galactosides.. Its function is as follows. Cleaves beta-linked terminal galactosyl residues from gangliosides, glycoproteins, and glycosaminoglycans. The chain is Probable beta-galactosidase C (lacC) from Aspergillus niger (strain ATCC MYA-4892 / CBS 513.88 / FGSC A1513).